Consider the following 745-residue polypeptide: Cellulose synthase-like protein E2 (745 aa).

Positions 1-14 (MAGSGGGVVSGGRQ) are enriched in gly residues. The interval 1–20 (MAGSGGGVVSGGRQRGPPLF) is disordered. Transmembrane regions (helical) follow at residues 29–49 (AMAA…LIWL) and 66–86 (WAWL…VLTL). Active-site residues include D155 and D458. The next 5 membrane-spanning stretches (helical) occupy residues 541–561 (FPTL…ISLF), 568–588 (WFIP…AESL), 658–678 (AMFV…VLGI), 686–706 (GPGG…IVAI), and 723–743 (LPAS…ILSI).

This sequence belongs to the glycosyltransferase 2 family. Plant cellulose synthase-like E subfamily.

Its subcellular location is the golgi apparatus membrane. Functionally, thought to be a Golgi-localized beta-glycan synthase that polymerize the backbones of noncellulosic polysaccharides (hemicelluloses) of plant cell wall. This Oryza sativa subsp. japonica (Rice) protein is Cellulose synthase-like protein E2 (CSLE2).